The sequence spans 200 residues: Transcriptional repressor NrdR (200 aa).

A zinc finger lies at 3–34; that stretch reads CPRCGKQEIRVLESRSAEGGQSVRRRRECMSC. The ATP-cone domain maps to 49-139; it reads IMVIKRDGSR…VYRKFQGIKD (91 aa). Residues 158 to 200 form a disordered region; sequence LERPLRNSPPSESESTASPDWVGGIPQLLDQNDTSSNLSEIPK. The span at 186–200 shows a compositional bias: polar residues; it reads LDQNDTSSNLSEIPK.

Belongs to the NrdR family. Requires Zn(2+) as cofactor.

Negatively regulates transcription of bacterial ribonucleotide reductase nrd genes and operons by binding to NrdR-boxes. This Synechococcus sp. (strain JA-3-3Ab) (Cyanobacteria bacterium Yellowstone A-Prime) protein is Transcriptional repressor NrdR.